The chain runs to 286 residues: Homoserine kinase (286 aa).

78 to 88 (PLARGLGSSSS) is a binding site for ATP.

It belongs to the GHMP kinase family. Homoserine kinase subfamily.

The protein localises to the cytoplasm. It carries out the reaction L-homoserine + ATP = O-phospho-L-homoserine + ADP + H(+). It participates in amino-acid biosynthesis; L-threonine biosynthesis; L-threonine from L-aspartate: step 4/5. Its function is as follows. Catalyzes the ATP-dependent phosphorylation of L-homoserine to L-homoserine phosphate. This is Homoserine kinase from Streptococcus equi subsp. equi (strain 4047).